Reading from the N-terminus, the 715-residue chain is Transcription activator of gluconeogenesis MGYG_02011 (715 aa).

Over residues 1–14 the composition is skewed to polar residues; sequence MSPHQTTGQESDNM. Positions 1 to 28 are disordered; the sequence is MSPHQTTGQESDNMAVNGENAPASSQYI. A DNA-binding region (zn(2)-C6 fungal-type) is located at residues 66–94; sequence CYACQRGHLTCGDERPCQRCIKRGFQDAC. Composition is skewed to polar residues over residues 129–166, 179–191, 203–223, and 362–385; these read QNNV…PQNK, YASQ…TYQI, SLPQ…GQFN, and MMTT…RPNA. Disordered regions lie at residues 129 to 223, 354 to 414, 534 to 569, and 628 to 663; these read QNNV…GQFN, SPAS…RRRH, NHNV…NSST, and GSNG…NGRG. Low complexity predominate over residues 386–400; the sequence is SVSQQRQQPVVSTPQ. Polar residues-rich tracts occupy residues 535–554 and 639–649; these read HNVN…SRGS and GEASSSEANEL. The segment covering 650-662 has biased composition (low complexity); that stretch reads NGSNANGATTNGR.

The protein belongs to the ERT1/acuK family.

Its subcellular location is the nucleus. Transcription factor which regulates nonfermentable carbon utilization. Activator of gluconeogenetic genes. In Arthroderma gypseum (strain ATCC MYA-4604 / CBS 118893) (Microsporum gypseum), this protein is Transcription activator of gluconeogenesis MGYG_02011.